We begin with the raw amino-acid sequence, 210 residues long: 3-hexulose-6-phosphate synthase (210 aa).

It belongs to the HPS/KGPDC family. HPS subfamily.

It catalyses the reaction D-ribulose 5-phosphate + formaldehyde = D-arabino-hex-3-ulose 6-phosphate. It participates in one-carbon metabolism; formaldehyde assimilation via RuMP pathway; D-fructose 6-phosphate from D-ribulose 5-phosphate and formaldehyde: step 1/2. Its function is as follows. Catalyzes the condensation of ribulose 5-phosphate with formaldehyde to form 3-hexulose 6-phosphate. The chain is 3-hexulose-6-phosphate synthase from Staphylococcus epidermidis (strain ATCC 12228 / FDA PCI 1200).